Reading from the N-terminus, the 425-residue chain is Serine--tRNA ligase (425 aa).

Residue 231–233 (TAE) participates in L-serine binding. 262–264 (RSE) contributes to the ATP binding site. Position 285 (Glu-285) interacts with L-serine. 349 to 352 (EISS) lines the ATP pocket. Ser-385 provides a ligand contact to L-serine.

The protein belongs to the class-II aminoacyl-tRNA synthetase family. Type-1 seryl-tRNA synthetase subfamily. As to quaternary structure, homodimer. The tRNA molecule binds across the dimer.

It is found in the cytoplasm. It catalyses the reaction tRNA(Ser) + L-serine + ATP = L-seryl-tRNA(Ser) + AMP + diphosphate + H(+). The catalysed reaction is tRNA(Sec) + L-serine + ATP = L-seryl-tRNA(Sec) + AMP + diphosphate + H(+). It functions in the pathway aminoacyl-tRNA biosynthesis; selenocysteinyl-tRNA(Sec) biosynthesis; L-seryl-tRNA(Sec) from L-serine and tRNA(Sec): step 1/1. Its function is as follows. Catalyzes the attachment of serine to tRNA(Ser). Is also able to aminoacylate tRNA(Sec) with serine, to form the misacylated tRNA L-seryl-tRNA(Sec), which will be further converted into selenocysteinyl-tRNA(Sec). The polypeptide is Serine--tRNA ligase (Bacillus subtilis (strain 168)).